The primary structure comprises 497 residues: Transcription termination/antitermination protein NusA (497 aa).

The 66-residue stretch at 135-200 folds into the S1 motif domain; the sequence is GKILTGIVKK…RGAQLFVTRS (66 aa). The region spanning 302–372 is the KH domain; sequence RHTIDIAVDS…LKIDQKISNI (71 aa). Repeat copies occupy residues 364–414 and 439–489. A 2 X 51 AA approximate repeats region spans residues 364–489; that stretch reads KIDQKISNIL…MLIMAARNIC (126 aa).

It belongs to the NusA family. In terms of assembly, monomer. Binds directly to the core enzyme of the DNA-dependent RNA polymerase and to nascent RNA.

The protein resides in the cytoplasm. Its function is as follows. Participates in both transcription termination and antitermination. This chain is Transcription termination/antitermination protein NusA, found in Buchnera aphidicola subsp. Baizongia pistaciae (strain Bp).